The primary structure comprises 188 residues: Small ribosomal subunit protein bS16 (188 aa).

A disordered region spans residues 155–188 (IAAASATEEAATEEVAEAAEEAPAAEENNETTEA). Residues 164-188 (AATEEVAEAAEEAPAAEENNETTEA) are compositionally biased toward acidic residues.

It belongs to the bacterial ribosomal protein bS16 family.

The protein is Small ribosomal subunit protein bS16 of Flavobacterium johnsoniae (strain ATCC 17061 / DSM 2064 / JCM 8514 / BCRC 14874 / CCUG 350202 / NBRC 14942 / NCIMB 11054 / UW101) (Cytophaga johnsonae).